We begin with the raw amino-acid sequence, 524 residues long: Cytochrome P450 1A1 (524 aa).

The segment at 33 to 44 is mitochondrial targeting signal; that stretch reads LRTQVPKGLKTP. Ser-71 carries O-linked (GlcNAc) serine glycosylation. Phe-228 contributes to the substrate binding site. Cys-461 serves as a coordination point for heme.

It belongs to the cytochrome P450 family. In terms of assembly, interacts with cytosolic chaperones HSP70 and HSP90; this interaction is required for initial targeting to mitochondria. Interacts (via mitochondrial targeting signal) with TOMM40 (via N-terminus); this interaction is required for translocation across the mitochondrial outer membrane. The cofactor is heme.

It localises to the endoplasmic reticulum membrane. It is found in the mitochondrion inner membrane. The protein resides in the microsome membrane. Its subcellular location is the cytoplasm. The enzyme catalyses an organic molecule + reduced [NADPH--hemoprotein reductase] + O2 = an alcohol + oxidized [NADPH--hemoprotein reductase] + H2O + H(+). It carries out the reaction estrone + reduced [NADPH--hemoprotein reductase] + O2 = 2-hydroxyestrone + oxidized [NADPH--hemoprotein reductase] + H2O + H(+). The catalysed reaction is estrone + reduced [NADPH--hemoprotein reductase] + O2 = 4-hydroxyestrone + oxidized [NADPH--hemoprotein reductase] + H2O + H(+). It catalyses the reaction estrone + reduced [NADPH--hemoprotein reductase] + O2 = 6alpha-hydroxyestrone + oxidized [NADPH--hemoprotein reductase] + H2O + H(+). The enzyme catalyses estrone + reduced [NADPH--hemoprotein reductase] + O2 = 15alpha-hydroxyestrone + oxidized [NADPH--hemoprotein reductase] + H2O + H(+). It carries out the reaction estrone + reduced [NADPH--hemoprotein reductase] + O2 = 16alpha-hydroxyestrone + oxidized [NADPH--hemoprotein reductase] + H2O + H(+). The catalysed reaction is 17beta-estradiol + reduced [NADPH--hemoprotein reductase] + O2 = 2-hydroxy-17beta-estradiol + oxidized [NADPH--hemoprotein reductase] + H2O + H(+). It catalyses the reaction 17beta-estradiol + reduced [NADPH--hemoprotein reductase] + O2 = 4-hydroxy-17beta-estradiol + oxidized [NADPH--hemoprotein reductase] + H2O + H(+). The enzyme catalyses 17beta-estradiol + reduced [NADPH--hemoprotein reductase] + O2 = 6alpha-hydroxy-17beta-estradiol + oxidized [NADPH--hemoprotein reductase] + H2O + H(+). It carries out the reaction 17beta-estradiol + reduced [NADPH--hemoprotein reductase] + O2 = 7alpha-hydroxy-17beta-estradiol + oxidized [NADPH--hemoprotein reductase] + H2O + H(+). The catalysed reaction is 17beta-estradiol + reduced [NADPH--hemoprotein reductase] + O2 = 15alpha-hydroxy-17beta-estradiol + oxidized [NADPH--hemoprotein reductase] + H2O + H(+). It catalyses the reaction (5Z,8Z,11Z)-eicosatrienoate + reduced [NADPH--hemoprotein reductase] + O2 = 19-hydroxy-(5Z,8Z,11Z)-eicosatrienoate + oxidized [NADPH--hemoprotein reductase] + H2O + H(+). The enzyme catalyses (5Z,8Z,11Z,14Z)-eicosatetraenoate + reduced [NADPH--hemoprotein reductase] + O2 = 16-hydroxy-(5Z,8Z,11Z,14Z)-eicosatetraenoate + oxidized [NADPH--hemoprotein reductase] + H2O + H(+). It carries out the reaction (5Z,8Z,11Z,14Z)-eicosatetraenoate + reduced [NADPH--hemoprotein reductase] + O2 = 17-hydroxy-(5Z,8Z,11Z,14Z)-eicosatetraenoate + oxidized [NADPH--hemoprotein reductase] + H2O + H(+). The catalysed reaction is (5Z,8Z,11Z,14Z)-eicosatetraenoate + reduced [NADPH--hemoprotein reductase] + O2 = 18-hydroxy-(5Z,8Z,11Z,14Z)-eicosatetraenoate + oxidized [NADPH--hemoprotein reductase] + H2O + H(+). It catalyses the reaction (5Z,8Z,11Z,14Z)-eicosatetraenoate + reduced [NADPH--hemoprotein reductase] + O2 = 19-hydroxy-(5Z,8Z,11Z,14Z)-eicosatetraenoate + oxidized [NADPH--hemoprotein reductase] + H2O + H(+). The enzyme catalyses (5Z,8Z,11Z,14Z,17Z)-eicosapentaenoate + reduced [NADPH--hemoprotein reductase] + O2 = 19-hydroxy-(5Z,8Z,11Z,14Z,17Z)-eicosapentaenoate + oxidized [NADPH--hemoprotein reductase] + H2O + H(+). It carries out the reaction (5Z,8Z,11Z,14Z)-eicosatetraenoate + reduced [NADPH--hemoprotein reductase] + O2 = (8R,9S)-epoxy-(5Z,11Z,14Z)-eicosatrienoate + oxidized [NADPH--hemoprotein reductase] + H2O + H(+). The catalysed reaction is (5Z,8Z,11Z,14Z)-eicosatetraenoate + reduced [NADPH--hemoprotein reductase] + O2 = (11R,12S)-epoxy-(5Z,8Z,14Z)-eicosatrienoate + oxidized [NADPH--hemoprotein reductase] + H2O + H(+). It catalyses the reaction (5Z,8Z,11Z,14Z)-eicosatetraenoate + reduced [NADPH--hemoprotein reductase] + O2 = (14S,15R)-epoxy-(5Z,8Z,11Z)-eicosatrienoate + oxidized [NADPH--hemoprotein reductase] + H2O + H(+). The enzyme catalyses (5Z,8Z,11Z,14Z)-eicosatetraenoate + reduced [NADPH--hemoprotein reductase] + O2 = (14R,15S)-epoxy-(5Z,8Z,11Z)-eicosatrienoate + oxidized [NADPH--hemoprotein reductase] + H2O + H(+). It carries out the reaction (5Z,8Z,11Z,14Z,17Z)-eicosapentaenoate + reduced [NADPH--hemoprotein reductase] + O2 = (17R,18S)-epoxy-(5Z,8Z,11Z,14Z)-eicosatetraenoate + oxidized [NADPH--hemoprotein reductase] + H2O + H(+). The catalysed reaction is (4Z,7Z,10Z,13Z,16Z,19Z)-docosahexaenoate + reduced [NADPH--hemoprotein reductase] + O2 = (19S,20R)-epoxy-(4Z,7Z,10Z,13Z,16Z)-docosapentaenoate + oxidized [NADPH--hemoprotein reductase] + H2O + H(+). It catalyses the reaction (4Z,7Z,10Z,13Z,16Z,19Z)-docosahexaenoate + reduced [NADPH--hemoprotein reductase] + O2 = (19R,20S)-epoxy-(4Z,7Z,10Z,13Z,16Z)-docosapentaenoate + oxidized [NADPH--hemoprotein reductase] + H2O + H(+). The enzyme catalyses all-trans-retinol + reduced [NADPH--hemoprotein reductase] + O2 = all-trans-retinal + oxidized [NADPH--hemoprotein reductase] + 2 H2O + H(+). It carries out the reaction all-trans-retinal + reduced [NADPH--hemoprotein reductase] + O2 = all-trans-retinoate + oxidized [NADPH--hemoprotein reductase] + H2O + 2 H(+). The catalysed reaction is (13S)-hydroperoxy-(9Z,11E)-octadecadienoate = 13-oxo-(9Z,11E)-octadecadienoate + H2O. It catalyses the reaction (12S)-hydroperoxy-(5Z,8Z,10E,14Z)-eicosatetraenoate = 12-oxo-(5Z,8Z,10E,14Z)-eicosatetraenoate + H2O. The enzyme catalyses (15S)-hydroperoxy-(5Z,8Z,11Z,13E)-eicosatetraenoate = 15-oxo-(5Z,8Z,11Z,13E)-eicosatetraenoate + H2O. It carries out the reaction (5S)-hydroperoxy-(6E,8Z,11Z,14Z)-eicosatetraenoate = 5-oxo-(6E,8Z,11Z,14Z)-eicosatetraenoate + H2O. It functions in the pathway steroid hormone biosynthesis. Its pathway is lipid metabolism; fatty acid metabolism. The protein operates within cofactor metabolism; retinol metabolism. Functionally, a cytochrome P450 monooxygenase involved in the metabolism of various endogenous substrates, including fatty acids, steroid hormones and vitamins. Mechanistically, uses molecular oxygen inserting one oxygen atom into a substrate, and reducing the second into a water molecule, with two electrons provided by NADPH via cytochrome P450 reductase (CPR; NADPH-ferrihemoprotein reductase). Catalyzes the hydroxylation of carbon-hydrogen bonds. Exhibits high catalytic activity for the formation of hydroxyestrogens from estrone (E1) and 17beta-estradiol (E2), namely 2-hydroxy E1 and E2, as well as D-ring hydroxylated E1 and E2 at the C15alpha and C16alpha positions. Displays different regioselectivities for polyunsaturated fatty acids (PUFA) hydroxylation. Catalyzes the epoxidation of double bonds of certain PUFA. Converts arachidonic acid toward epoxyeicosatrienoic acid (EET) regioisomers, 8,9-, 11,12-, and 14,15-EET, that function as lipid mediators in the vascular system. Displays an absolute stereoselectivity in the epoxidation of eicosapentaenoic acid (EPA) producing the 17(R),18(S) enantiomer. May play an important role in all-trans retinoic acid biosynthesis in extrahepatic tissues. Catalyzes two successive oxidative transformation of all-trans retinol to all-trans retinal and then to the active form all-trans retinoic acid. May also participate in eicosanoids metabolism by converting hydroperoxide species into oxo metabolites (lipoxygenase-like reaction, NADPH-independent). This chain is Cytochrome P450 1A1 (CYP1A1), found in Mesocricetus auratus (Golden hamster).